We begin with the raw amino-acid sequence, 221 residues long: Histone H1.3 (221 aa).

Positions 1 to 17 are enriched in low complexity; the sequence is MSETAPLAPTIPAPAEK. Residues 1–43 are disordered; that stretch reads MSETAPLAPTIPAPAEKTPVKKKAKKAGATAGKRKASGPPVSE. N-acetylserine is present on Ser-2. The residue at position 2 (Ser-2) is a Phosphoserine. At Lys-17 the chain carries N6-acetyllysine. Position 18 is a phosphothreonine (Thr-18). The segment covering 20–36 has biased composition (basic residues); it reads VKKKAKKAGATAGKRKA. N6-(beta-hydroxybutyryl)lysine is present on residues Lys-35, Lys-47, and Lys-53. The region spanning 37 to 110 is the H15 domain; the sequence is SGPPVSELIT…GASGSFKLNK (74 aa). Residue Arg-55 is modified to Citrulline. 4 positions are modified to N6-(beta-hydroxybutyryl)lysine: Lys-65, Lys-76, Lys-86, and Lys-91. The disordered stretch occupies residues 90–221; that stretch reads SKGTLVQTKG…KAKKAAPKKK (132 aa). Ser-105 bears the Phosphoserine; by PKC mark. At Lys-107 the chain carries N6-(beta-hydroxybutyryl)lysine. Basic residues-rich tracts occupy residues 120-141, 150-161, and 170-179; these read KAKK…KPKK, KSIKKTPKKVKK, and KVAKSAKKVK. The residue at position 170 (Lys-170) is an N6-(beta-hydroxybutyryl)lysine. Over residues 180 to 193 the composition is skewed to low complexity; the sequence is TPQPKKAAKSPAKA. The span at 194 to 221 shows a compositional bias: basic residues; that stretch reads KAPKPKAAKPKSGKPKVTKAKKAAPKKK.

The protein belongs to the histone H1/H5 family. Post-translationally, H1 histones are progressively phosphorylated during the cell cycle, becoming maximally phosphorylated during late G2 phase and M phase, and being dephosphorylated sharply thereafter. In terms of processing, citrullination at Arg-55 (H1R54ci) by PADI4 takes place within the DNA-binding site of H1 and results in its displacement from chromatin and global chromatin decondensation, thereby promoting pluripotency and stem cell maintenance.

It localises to the nucleus. Its subcellular location is the chromosome. Histone H1 protein binds to linker DNA between nucleosomes forming the macromolecular structure known as the chromatin fiber. Histones H1 are necessary for the condensation of nucleosome chains into higher-order structured fibers. Also acts as a regulator of individual gene transcription through chromatin remodeling, nucleosome spacing and DNA methylation. This is Histone H1.3 from Homo sapiens (Human).